A 118-amino-acid chain; its full sequence is Large ribosomal subunit protein bL20 (118 aa).

This sequence belongs to the bacterial ribosomal protein bL20 family.

Its function is as follows. Binds directly to 23S ribosomal RNA and is necessary for the in vitro assembly process of the 50S ribosomal subunit. It is not involved in the protein synthesizing functions of that subunit. The protein is Large ribosomal subunit protein bL20 of Elusimicrobium minutum (strain Pei191).